The sequence spans 135 residues: Methylglyoxal synthase (135 aa).

The 135-residue stretch at 1–135 folds into the MGS-like domain; that stretch reads MPKRRRIALI…AQPDPKEIHA (135 aa). Substrate contacts are provided by residues histidine 12, lysine 16, 38–41, and 58–59; these read TGTT and SG. Aspartate 64 (proton donor/acceptor) is an active-site residue. Histidine 91 serves as a coordination point for substrate.

The protein belongs to the methylglyoxal synthase family.

The enzyme catalyses dihydroxyacetone phosphate = methylglyoxal + phosphate. Functionally, catalyzes the formation of methylglyoxal from dihydroxyacetone phosphate. The chain is Methylglyoxal synthase from Ralstonia nicotianae (strain ATCC BAA-1114 / GMI1000) (Ralstonia solanacearum).